Consider the following 194-residue polypeptide: Phosphoheptose isomerase (194 aa).

In terms of domain architecture, SIS spans 37–194 (IAKSFKNKNK…IIEKEMKKIN (158 aa)). Residue 52-54 (NGG) participates in substrate binding. Positions 61 and 65 each coordinate Zn(2+). Residues Glu65, 93–94 (ND), 119–121 (STS), Ser124, and Gln172 contribute to the substrate site. 2 residues coordinate Zn(2+): Gln172 and His180.

This sequence belongs to the SIS family. GmhA subfamily. In terms of assembly, homotetramer. It depends on Zn(2+) as a cofactor.

It localises to the cytoplasm. It catalyses the reaction 2 D-sedoheptulose 7-phosphate = D-glycero-alpha-D-manno-heptose 7-phosphate + D-glycero-beta-D-manno-heptose 7-phosphate. It participates in carbohydrate biosynthesis; D-glycero-D-manno-heptose 7-phosphate biosynthesis; D-glycero-alpha-D-manno-heptose 7-phosphate and D-glycero-beta-D-manno-heptose 7-phosphate from sedoheptulose 7-phosphate: step 1/1. Functionally, catalyzes the isomerization of sedoheptulose 7-phosphate in D-glycero-D-manno-heptose 7-phosphate. The protein is Phosphoheptose isomerase of Buchnera aphidicola subsp. Schizaphis graminum (strain Sg).